Consider the following 555-residue polypeptide: CTP synthase (555 aa).

Positions 1–270 (MTKFVFVTGG…DGLICDKLRL (270 aa)) are amidoligase domain. A CTP-binding site is contributed by Ser-13. Residue Ser-13 participates in UTP binding. ATP is bound by residues 14-19 (SLGKGI) and Asp-71. Mg(2+) is bound by residues Asp-71 and Glu-144. CTP is bound by residues 151 to 153 (DIE), 191 to 196 (KTKPTQ), and Lys-227. Residues 191–196 (KTKPTQ) and Lys-227 contribute to the UTP site. In terms of domain architecture, Glutamine amidotransferase type-1 spans 295-547 (NIVMVGKYVE…IKAALDHQAA (253 aa)). Residue Gly-356 participates in L-glutamine binding. Cys-383 (nucleophile; for glutamine hydrolysis) is an active-site residue. Residues 384-387 (LGMQ), Glu-407, and Arg-473 each bind L-glutamine. Catalysis depends on residues His-520 and Glu-522.

This sequence belongs to the CTP synthase family. As to quaternary structure, homotetramer.

It catalyses the reaction UTP + L-glutamine + ATP + H2O = CTP + L-glutamate + ADP + phosphate + 2 H(+). The catalysed reaction is L-glutamine + H2O = L-glutamate + NH4(+). The enzyme catalyses UTP + NH4(+) + ATP = CTP + ADP + phosphate + 2 H(+). It participates in pyrimidine metabolism; CTP biosynthesis via de novo pathway; CTP from UDP: step 2/2. Allosterically activated by GTP, when glutamine is the substrate; GTP has no effect on the reaction when ammonia is the substrate. The allosteric effector GTP functions by stabilizing the protein conformation that binds the tetrahedral intermediate(s) formed during glutamine hydrolysis. Inhibited by the product CTP, via allosteric rather than competitive inhibition. Its function is as follows. Catalyzes the ATP-dependent amination of UTP to CTP with either L-glutamine or ammonia as the source of nitrogen. Regulates intracellular CTP levels through interactions with the four ribonucleotide triphosphates. The polypeptide is CTP synthase (Albidiferax ferrireducens (strain ATCC BAA-621 / DSM 15236 / T118) (Rhodoferax ferrireducens)).